Here is a 458-residue protein sequence, read N- to C-terminus: Putative long chain fatty acid-CoA ligase VraA (458 aa).

This sequence belongs to the ATP-dependent AMP-binding enzyme family.

This Staphylococcus aureus (strain MRSA252) protein is Putative long chain fatty acid-CoA ligase VraA (vraA).